Reading from the N-terminus, the 132-residue chain is Small ribosomal subunit protein uS8 (132 aa).

This sequence belongs to the universal ribosomal protein uS8 family. In terms of assembly, part of the 30S ribosomal subunit. Contacts proteins S5 and S12.

Its function is as follows. One of the primary rRNA binding proteins, it binds directly to 16S rRNA central domain where it helps coordinate assembly of the platform of the 30S subunit. This is Small ribosomal subunit protein uS8 from Streptococcus pneumoniae (strain Taiwan19F-14).